Here is a 241-residue protein sequence, read N- to C-terminus: MSRAPLPLRDDERLIFALDVPDRAQALEWVDRLGDSVAFYKIGMELLASGEYFQVLDELARRDKRVFVDLKFFDIPATAAAVIKRLSQWPVSYATIHGWHPAMMEACAAANSSDMRLLAVTVLTSMGRPDLAQMGIDREPVDVVVERALAAQAAGIDGVIASGQEAGPIRAATGAGFSIVCPGIRPGGPVGDDQKRTVGVAQAFADGADAIVVGRPIRLATDPQAAARAIQQEIASALAAR.

Substrate is bound by residues Asp19, Lys41, 69–78 (DLKFFDIPAT), Thr124, Arg185, Gln194, Gly214, and Arg215. Lys71 (proton donor) is an active-site residue.

This sequence belongs to the OMP decarboxylase family. Type 1 subfamily. In terms of assembly, homodimer.

It carries out the reaction orotidine 5'-phosphate + H(+) = UMP + CO2. It participates in pyrimidine metabolism; UMP biosynthesis via de novo pathway; UMP from orotate: step 2/2. Functionally, catalyzes the decarboxylation of orotidine 5'-monophosphate (OMP) to uridine 5'-monophosphate (UMP). This is Orotidine 5'-phosphate decarboxylase from Stenotrophomonas maltophilia (strain K279a).